A 445-amino-acid polypeptide reads, in one-letter code: Allantoinase (445 aa).

Residues histidine 63, histidine 65, lysine 150, histidine 186, histidine 238, and aspartate 311 each coordinate Zn(2+). Lysine 150 is subject to N6-carboxylysine.

This sequence belongs to the metallo-dependent hydrolases superfamily. Allantoinase family. As to quaternary structure, homotetramer. Requires Zn(2+) as cofactor. Carboxylation allows a single lysine to coordinate two zinc ions.

It carries out the reaction (S)-allantoin + H2O = allantoate + H(+). It participates in nitrogen metabolism; (S)-allantoin degradation; allantoate from (S)-allantoin: step 1/1. Catalyzes the conversion of allantoin (5-ureidohydantoin) to allantoic acid by hydrolytic cleavage of the five-member hydantoin ring. This is Allantoinase from Streptomyces avermitilis (strain ATCC 31267 / DSM 46492 / JCM 5070 / NBRC 14893 / NCIMB 12804 / NRRL 8165 / MA-4680).